Consider the following 383-residue polypeptide: tRNA-specific 2-thiouridylase MnmA (383 aa).

ATP is bound by residues 9–16 and Met-35; that span reads GMSGGVDS. The interval 95–97 is interaction with target base in tRNA; sequence NPD. Cys-100 acts as the Nucleophile in catalysis. Cys-100 and Cys-196 are joined by a disulfide. Gly-124 contacts ATP. Residues 146-148 are interaction with tRNA; that stretch reads KDQ. The active-site Cysteine persulfide intermediate is Cys-196. An interaction with tRNA region spans residues 308 to 309; the sequence is RY.

This sequence belongs to the MnmA/TRMU family.

It localises to the cytoplasm. The enzyme catalyses S-sulfanyl-L-cysteinyl-[protein] + uridine(34) in tRNA + AH2 + ATP = 2-thiouridine(34) in tRNA + L-cysteinyl-[protein] + A + AMP + diphosphate + H(+). In terms of biological role, catalyzes the 2-thiolation of uridine at the wobble position (U34) of tRNA, leading to the formation of s(2)U34. This Burkholderia pseudomallei (strain 668) protein is tRNA-specific 2-thiouridylase MnmA.